Here is a 198-residue protein sequence, read N- to C-terminus: Probable GTP-binding protein EngB (198 aa).

The 175-residue stretch at 22–196 (NLSEIAFVGR…WNWIKGQAEL (175 aa)) folds into the EngB-type G domain. GTP contacts are provided by residues 30 to 37 (GRSNVGKS), 57 to 61 (GKTQT), 75 to 78 (DVPG), 142 to 145 (TKAD), and 175 to 177 (FSA). Positions 37 and 59 each coordinate Mg(2+).

The protein belongs to the TRAFAC class TrmE-Era-EngA-EngB-Septin-like GTPase superfamily. EngB GTPase family. It depends on Mg(2+) as a cofactor.

Its function is as follows. Necessary for normal cell division and for the maintenance of normal septation. The chain is Probable GTP-binding protein EngB from Oenococcus oeni (strain ATCC BAA-331 / PSU-1).